Here is a 68-residue protein sequence, read N- to C-terminus: SERF-like protein YDL085C-A (68 aa).

Basic and acidic residues-rich tracts occupy residues 1–43 (MARG…EILR) and 50–68 (DARR…KTRR). Positions 1-68 (MARGNQRDLA…EKLKAEKTRR (68 aa)) are disordered. At Ser-37 the chain carries Phosphoserine.

It belongs to the SERF family.

It localises to the cytoplasm. It is found in the nucleus. The polypeptide is SERF-like protein YDL085C-A (Saccharomyces cerevisiae (strain ATCC 204508 / S288c) (Baker's yeast)).